Consider the following 87-residue polypeptide: Putative protein KleG (87 aa).

2 disordered regions span residues 1 to 23 (MRHS…WPSS) and 61 to 87 (IPTT…IFSR). Positions 68–78 (RGRRPQRHRPS) are enriched in basic residues.

The polypeptide is Putative protein KleG (kleG) (Escherichia coli).